A 101-amino-acid polypeptide reads, in one-letter code: Small ribosomal subunit protein uS14 (101 aa).

This sequence belongs to the universal ribosomal protein uS14 family. As to quaternary structure, part of the 30S ribosomal subunit. Contacts proteins S3 and S10.

In terms of biological role, binds 16S rRNA, required for the assembly of 30S particles and may also be responsible for determining the conformation of the 16S rRNA at the A site. The chain is Small ribosomal subunit protein uS14 from Francisella tularensis subsp. tularensis (strain FSC 198).